We begin with the raw amino-acid sequence, 544 residues long: Serine/threonine-protein kinase PAK 3 (544 aa).

Residues 1–73 (MSDSLDNEEK…EKERPEISLP (73 aa)) are disordered. Ser2 and Ser4 each carry phosphoserine. Positions 18–32 (MNSNNRDSSALNHSS) are enriched in polar residues. Ser50 is modified (phosphoserine; by autocatalysis). Over residues 63-73 (KEKERPEISLP) the composition is skewed to basic and acidic residues. A GTPase-binding region spans residues 65 to 108 (KERPEISLPSDFEHTIHVGFDAVTGEFTGIPEQWARLLQTSNIT). The segment at 65–135 (KERPEISLPS…YDSKETVNNQ (71 aa)) is autoregulatory region. A CRIB domain is found at 70–83 (ISLPSDFEHTIHVG). Residues 84 to 267 (FDAVTGEFTG…IVSVGDPKKK (184 aa)) are linker. A Phosphoserine; by autocatalysis modification is found at Ser139. 2 disordered regions span residues 156–197 (SNTK…RPEH) and 213–248 (PAAP…KMTD). Ser171 is modified (phosphoserine). The segment covering 171–186 (SEEEDEEEEEEEDDNE) has biased composition (acidic residues). A compositionally biased stretch (polar residues) spans 224 to 235 (SAENANSSTLYR). The region spanning 268 to 519 (YTRFEKIGQG…AKELLQHPFL (252 aa)) is the Protein kinase domain. ATP-binding positions include 274-282 (IGQGASGTV) and Lys297. The Proton acceptor role is filled by Asp387. Thr421 bears the Phosphothreonine; by autocatalysis mark.

The protein belongs to the protein kinase superfamily. STE Ser/Thr protein kinase family. STE20 subfamily. In terms of assembly, interacts tightly with GTP-bound but not GDP-bound CDC42/p21 and RAC1. Shows highly specific binding to the SH3 domains of phospholipase C-gamma and of adapter protein NCK. Interacts with the C-terminal of APP. Interacts with ARHGEF6 and ARHGEF7. Interacts with GIT1 and GIT2. Mg(2+) is required as a cofactor. In terms of processing, autophosphorylated when activated by CDC42/p21. Post-translationally, neddylated. Detected at high levels in the brain and at low levels in the testis.

It is found in the cytoplasm. The enzyme catalyses L-seryl-[protein] + ATP = O-phospho-L-seryl-[protein] + ADP + H(+). The catalysed reaction is L-threonyl-[protein] + ATP = O-phospho-L-threonyl-[protein] + ADP + H(+). With respect to regulation, activated by binding small G proteins. Binding of GTP-bound CDC42 or RAC1 to the autoregulatory region releases monomers from the autoinhibited dimer, enables phosphorylation of Thr-421 and allows the kinase domain to adopt an active structure. In terms of biological role, serine/threonine protein kinase that plays a role in a variety of different signaling pathways including cytoskeleton regulation, cell migration, or cell cycle regulation. Plays a role in dendrite spine morphogenesis as well as synapse formation and plasticity. Acts as a downstream effector of the small GTPases CDC42 and RAC1. Activation by the binding of active CDC42 and RAC1 results in a conformational change and a subsequent autophosphorylation on several serine and/or threonine residues. Phosphorylates MAPK4 and MAPK6 and activates the downstream target MAPKAPK5, a regulator of F-actin polymerization and cell migration. Additionally, phosphorylates TNNI3/troponin I to modulate calcium sensitivity and relaxation kinetics of thin myofilaments. May also be involved in early neuronal development. In hippocampal neurons, necessary for the formation of dendritic spines and excitatory synapses; this function is dependent on kinase activity and may be exerted by the regulation of actomyosin contractility through the phosphorylation of myosin II regulatory light chain (MLC). In Rattus norvegicus (Rat), this protein is Serine/threonine-protein kinase PAK 3 (Pak3).